Here is a 101-residue protein sequence, read N- to C-terminus: Aspartyl/glutamyl-tRNA(Asn/Gln) amidotransferase subunit C (101 aa).

Belongs to the GatC family. Heterotrimer of A, B and C subunits.

It carries out the reaction L-glutamyl-tRNA(Gln) + L-glutamine + ATP + H2O = L-glutaminyl-tRNA(Gln) + L-glutamate + ADP + phosphate + H(+). The catalysed reaction is L-aspartyl-tRNA(Asn) + L-glutamine + ATP + H2O = L-asparaginyl-tRNA(Asn) + L-glutamate + ADP + phosphate + 2 H(+). Functionally, allows the formation of correctly charged Asn-tRNA(Asn) or Gln-tRNA(Gln) through the transamidation of misacylated Asp-tRNA(Asn) or Glu-tRNA(Gln) in organisms which lack either or both of asparaginyl-tRNA or glutaminyl-tRNA synthetases. The reaction takes place in the presence of glutamine and ATP through an activated phospho-Asp-tRNA(Asn) or phospho-Glu-tRNA(Gln). The sequence is that of Aspartyl/glutamyl-tRNA(Asn/Gln) amidotransferase subunit C from Enterococcus faecalis (strain ATCC 700802 / V583).